A 72-amino-acid chain; its full sequence is Large ribosomal subunit protein bL31 (72 aa).

Cys16, Cys18, Cys36, and Cys39 together coordinate Zn(2+).

This sequence belongs to the bacterial ribosomal protein bL31 family. Type A subfamily. Part of the 50S ribosomal subunit. It depends on Zn(2+) as a cofactor.

Its function is as follows. Binds the 23S rRNA. The chain is Large ribosomal subunit protein bL31 from Geobacter sp. (strain M21).